The chain runs to 104 residues: L-rhamnose mutarotase (104 aa).

Tyr-18 contacts substrate. His-22 acts as the Proton donor in catalysis. Substrate contacts are provided by residues Tyr-41 and 76 to 77 (WW).

It belongs to the rhamnose mutarotase family. Homodimer.

The protein localises to the cytoplasm. The catalysed reaction is alpha-L-rhamnose = beta-L-rhamnose. It participates in carbohydrate metabolism; L-rhamnose metabolism. Involved in the anomeric conversion of L-rhamnose. The protein is L-rhamnose mutarotase of Pectobacterium carotovorum subsp. carotovorum (strain PC1).